The sequence spans 434 residues: Probable exopolygalacturonase A (434 aa).

The N-terminal stretch at 1–19 is a signal peptide; sequence MKLPILVTLFITLPALCVS. 5 N-linked (GlcNAc...) asparagine glycosylation sites follow: asparagine 46, asparagine 57, asparagine 106, asparagine 199, and asparagine 207. A PbH1 1 repeat occupies 232–253; sequence SSNIVIQDSRIVNTDDCVSFKP. The active-site Proton donor is aspartate 246. A disulfide bridge connects residues cysteine 248 and cysteine 265. N-linked (GlcNAc...) asparagine glycosylation is present at asparagine 254. One copy of the PbH1 2 repeat lies at 255–275; that stretch reads STQIVIQNLDCTGSHGISVGS. Residue histidine 269 is part of the active site. N-linked (GlcNAc...) asparagine glycans are attached at residues asparagine 293, asparagine 329, and asparagine 354. A disulfide bridge connects residues cysteine 392 and cysteine 398. An N-linked (GlcNAc...) asparagine glycan is attached at asparagine 400.

It belongs to the glycosyl hydrolase 28 family.

The protein resides in the secreted. The catalysed reaction is [(1-&gt;4)-alpha-D-galacturonosyl](n) + H2O = alpha-D-galacturonate + [(1-&gt;4)-alpha-D-galacturonosyl](n-1). In terms of biological role, specific in hydrolyzing the terminal glycosidic bond of polygalacturonic acid and oligogalacturonates. This chain is Probable exopolygalacturonase A (pgxA), found in Aspergillus niger (strain ATCC MYA-4892 / CBS 513.88 / FGSC A1513).